Consider the following 750-residue polypeptide: Photosystem I P700 chlorophyll a apoprotein A1 (750 aa).

8 helical membrane-spanning segments follow: residues 70-93 (VFSA…FHGA), 156-179 (LYCT…FHYH), 195-219 (LNHH…HVSL), 291-309 (IAHH…GHMY), 346-369 (WHAQ…HHMY), 385-411 (LSLF…IFMV), 433-455 (AIIS…LYIH), and 531-549 (FLVH…LILL). Residues Cys573 and Cys582 each coordinate [4Fe-4S] cluster. The next 2 membrane-spanning stretches (helical) occupy residues 589 to 610 (HVFL…HFSW) and 664 to 686 (LSAY…MFLF). His675 is a chlorophyll a' binding site. Chlorophyll a contacts are provided by Met683 and Tyr691. A phylloquinone-binding site is contributed by Trp692. The chain crosses the membrane as a helical span at residues 724-744 (AVGVTHYLLGGIATTWAFFLA).

It belongs to the PsaA/PsaB family. As to quaternary structure, the PsaA/B heterodimer binds the P700 chlorophyll special pair and subsequent electron acceptors. PSI consists of a core antenna complex that captures photons, and an electron transfer chain that converts photonic excitation into a charge separation. The eukaryotic PSI reaction center is composed of at least 11 subunits. Requires P700 is a chlorophyll a/chlorophyll a' dimer, A0 is one or more chlorophyll a, A1 is one or both phylloquinones and FX is a shared 4Fe-4S iron-sulfur center. as cofactor.

The protein localises to the plastid. It is found in the chloroplast thylakoid membrane. The catalysed reaction is reduced [plastocyanin] + hnu + oxidized [2Fe-2S]-[ferredoxin] = oxidized [plastocyanin] + reduced [2Fe-2S]-[ferredoxin]. In terms of biological role, psaA and PsaB bind P700, the primary electron donor of photosystem I (PSI), as well as the electron acceptors A0, A1 and FX. PSI is a plastocyanin-ferredoxin oxidoreductase, converting photonic excitation into a charge separation, which transfers an electron from the donor P700 chlorophyll pair to the spectroscopically characterized acceptors A0, A1, FX, FA and FB in turn. Oxidized P700 is reduced on the lumenal side of the thylakoid membrane by plastocyanin. The sequence is that of Photosystem I P700 chlorophyll a apoprotein A1 from Lobularia maritima (Sweet alyssum).